We begin with the raw amino-acid sequence, 429 residues long: 3-phosphoshikimate 1-carboxyvinyltransferase (429 aa).

3-phosphoshikimate is bound by residues lysine 22, serine 23, and arginine 27. Lysine 22 contacts phosphoenolpyruvate. 2 residues coordinate phosphoenolpyruvate: glycine 94 and arginine 122. 3-phosphoshikimate-binding residues include serine 167, glutamine 169, aspartate 315, and lysine 342. Glutamine 169 contacts phosphoenolpyruvate. Aspartate 315 functions as the Proton acceptor in the catalytic mechanism. Phosphoenolpyruvate contacts are provided by arginine 346 and arginine 388.

Belongs to the EPSP synthase family. As to quaternary structure, monomer.

It is found in the cytoplasm. The catalysed reaction is 3-phosphoshikimate + phosphoenolpyruvate = 5-O-(1-carboxyvinyl)-3-phosphoshikimate + phosphate. It participates in metabolic intermediate biosynthesis; chorismate biosynthesis; chorismate from D-erythrose 4-phosphate and phosphoenolpyruvate: step 6/7. Catalyzes the transfer of the enolpyruvyl moiety of phosphoenolpyruvate (PEP) to the 5-hydroxyl of shikimate-3-phosphate (S3P) to produce enolpyruvyl shikimate-3-phosphate and inorganic phosphate. The polypeptide is 3-phosphoshikimate 1-carboxyvinyltransferase (Geotalea daltonii (strain DSM 22248 / JCM 15807 / FRC-32) (Geobacter daltonii)).